The sequence spans 197 residues: Nucleoid occlusion factor SlmA (197 aa).

Positions 7–67 (INRREHILQC…GLIEFIEESL (61 aa)) constitute an HTH tetR-type domain. Positions 30–49 (TTAKLAAEVGVSEAALYRHF) form a DNA-binding region, H-T-H motif. Residues 109–136 (DALLGENERLRSRISQLFAKIETHLKQI) adopt a coiled-coil conformation.

Belongs to the nucleoid occlusion factor SlmA family. As to quaternary structure, homodimer. Interacts with FtsZ.

Its subcellular location is the cytoplasm. It localises to the nucleoid. Required for nucleoid occlusion (NO) phenomenon, which prevents Z-ring formation and cell division over the nucleoid. Acts as a DNA-associated cell division inhibitor that binds simultaneously chromosomal DNA and FtsZ, and disrupts the assembly of FtsZ polymers. SlmA-DNA-binding sequences (SBS) are dispersed on non-Ter regions of the chromosome, preventing FtsZ polymerization at these regions. This Shewanella halifaxensis (strain HAW-EB4) protein is Nucleoid occlusion factor SlmA.